Reading from the N-terminus, the 119-residue chain is Holo-[acyl-carrier-protein] synthase (119 aa).

D7 and E53 together coordinate Mg(2+).

Belongs to the P-Pant transferase superfamily. AcpS family. It depends on Mg(2+) as a cofactor.

It is found in the cytoplasm. It carries out the reaction apo-[ACP] + CoA = holo-[ACP] + adenosine 3',5'-bisphosphate + H(+). In terms of biological role, transfers the 4'-phosphopantetheine moiety from coenzyme A to a Ser of acyl-carrier-protein. The sequence is that of Holo-[acyl-carrier-protein] synthase from Dehalococcoides mccartyi (strain CBDB1).